Consider the following 241-residue polypeptide: Anti-Pycsar protein Apyc1 (241 aa).

Positions 17–215 (DNNNALLEQD…SVQKKTWLMH (199 aa)) are beta-lactamase-like. Zn(2+)-binding residues include histidine 59, histidine 61, aspartate 63, histidine 64, histidine 142, aspartate 162, and histidine 215.

It belongs to the nuclease anti-Pycsar protein Apyc1 family. Homodimer. Requires Zn(2+) as cofactor.

The catalysed reaction is 3',5'-cyclic CMP + H2O = CMP + H(+). It catalyses the reaction 3',5'-cyclic UMP + H2O = UMP + H(+). Counteracts the endogenous Pycsar antiviral defense system. Phosphodiesterase that enables metal-dependent hydrolysis of host cyclic nucleotide Pycsar defense signals such as cCMP and cUMP. This Paenibacillus harenae protein is Anti-Pycsar protein Apyc1.